A 232-amino-acid chain; its full sequence is Ubiquinone biosynthesis O-methyltransferase (232 aa).

S-adenosyl-L-methionine-binding residues include Arg-36, Gly-55, Asp-76, and Met-120.

Belongs to the methyltransferase superfamily. UbiG/COQ3 family.

It catalyses the reaction a 3-demethylubiquinol + S-adenosyl-L-methionine = a ubiquinol + S-adenosyl-L-homocysteine + H(+). It carries out the reaction a 3-(all-trans-polyprenyl)benzene-1,2-diol + S-adenosyl-L-methionine = a 2-methoxy-6-(all-trans-polyprenyl)phenol + S-adenosyl-L-homocysteine + H(+). Its pathway is cofactor biosynthesis; ubiquinone biosynthesis. Functionally, O-methyltransferase that catalyzes the 2 O-methylation steps in the ubiquinone biosynthetic pathway. This chain is Ubiquinone biosynthesis O-methyltransferase, found in Burkholderia cenocepacia (strain ATCC BAA-245 / DSM 16553 / LMG 16656 / NCTC 13227 / J2315 / CF5610) (Burkholderia cepacia (strain J2315)).